We begin with the raw amino-acid sequence, 474 residues long: Sugar transporter ERD6-like 17 (474 aa).

The next 12 helical transmembrane spans lie at 27–47 (ITACVILSTFVAVCGSFSFGV), 76–96 (FATLGAAIGALFCGNLAMVIG), 106–126 (FLCITGWLSIAFAKEVVLLNF), 129–149 (IISGIGFGLTSYVVPVYIAEI), 159–180 (TFSNQLLQNAGLAMIYFCGNFI), 184–204 (TLALLGALPCFIQVIGLFFVP), 266–286 (TLVVGIGLMLIQQFSGSAAVI), 302–322 (IGTTMLGIFVIPKAMIGLILV), 329–349 (PLLMTSAFGMSMTCMLLGVAF), 363–383 (ILSFICVMMYIATYAIGLGGL), 403–423 (IVTLVSFSSSSIVTYAFNFLF), and 429–449 (GTFFIFAGIGGAALLFIWLLV).

This sequence belongs to the major facilitator superfamily. Sugar transporter (TC 2.A.1.1) family. Expressed in young seedlings.

It localises to the membrane. In terms of biological role, sugar transporter. This Arabidopsis thaliana (Mouse-ear cress) protein is Sugar transporter ERD6-like 17.